A 342-amino-acid chain; its full sequence is tRNA-specific 2-thiouridylase MnmA (342 aa).

ATP is bound by residues 6–13 (LLSGGVDS) and Leu-32. The active-site Nucleophile is the Cys-92. An intrachain disulfide couples Cys-92 to Cys-191. Gly-116 provides a ligand contact to ATP. The tract at residues 138–140 (KDQ) is interaction with tRNA. Cys-191 serves as the catalytic Cysteine persulfide intermediate. Positions 293–294 (RY) are interaction with tRNA.

This sequence belongs to the MnmA/TRMU family.

It localises to the cytoplasm. The enzyme catalyses S-sulfanyl-L-cysteinyl-[protein] + uridine(34) in tRNA + AH2 + ATP = 2-thiouridine(34) in tRNA + L-cysteinyl-[protein] + A + AMP + diphosphate + H(+). Its function is as follows. Catalyzes the 2-thiolation of uridine at the wobble position (U34) of tRNA, leading to the formation of s(2)U34. The protein is tRNA-specific 2-thiouridylase MnmA of Helicobacter pylori (strain HPAG1).